The chain runs to 337 residues: MNAPQAPVLVADIGGTNARFALANPTLTSAPLLNDSMREFAVIEFPSLGEAAQHYLHHIGIHTTKGVFAIAGHVDGDEARITNHPWVITRTRTATMLGFDTLHLINDFVAQAMAISVLGPQDVIQIGSAKWEQFPLSAATRNYGIIGPGTGLGVGGLVIRNGRCYPLETEGGHVSFPPSTPEEIRILEILSQQFGRVSNERLISGPGIVNIHRALSEIDGIDPGPLRPQDITMRAADGDIRATRTINLFCNIFGAITGDLVLIQGAWDGVFLTGGLVPKLLNSIQHSGFRQRFEHKGRFSAIMARIPSLAVIHPHPGLLGAAVYARDTEQVPQEIKA.

Residue 11–16 coordinates ATP; sequence ADIGGT.

The protein belongs to the bacterial glucokinase family.

The protein resides in the cytoplasm. It catalyses the reaction D-glucose + ATP = D-glucose 6-phosphate + ADP + H(+). This is Glucokinase from Xylella fastidiosa (strain M12).